Consider the following 353-residue polypeptide: Protein Wnt-11b (353 aa).

The signal sequence occupies residues 1 to 22 (MAPTRHWVTPLLLLCCSGICGA). Asn-31, Asn-38, and Asn-88 each carry an N-linked (GlcNAc...) asparagine glycan. Intrachain disulfides connect Cys-78–Cys-89, Cys-128–Cys-136, Cys-138–Cys-155, Cys-208–Cys-222, and Cys-210–Cys-217. Residue Ser-214 is the site of O-palmitoleoyl serine; by PORCN attachment. Sulfotyrosine is present on residues Tyr-274 and Tyr-281. Intrachain disulfides connect Cys-282–Cys-313, Cys-298–Cys-308, Cys-312–Cys-352, Cys-328–Cys-343, Cys-330–Cys-340, and Cys-335–Cys-336. N-linked (GlcNAc...) asparagine glycosylation occurs at Asn-299.

It belongs to the Wnt family. Homodimer. Secreted homodimers form a complex with wnt5a homodimers; tyrosine sulfation of both wnt11 and wnt5a by tpst1 is required for this interaction. Interacts with the transmembrane receptor fzd7/fz7. Interacts with lrp6 and ryk. Interacts with tdgf1/frl1. Interacts weakly with frzb1 and strongly with frzb2/crescent. Interaction with frzb2/crescent antagonizes wnt11 function in the neuroectoderm, but enhances it in mesodermal tissue. Glycosylation is required for protein secretion. In terms of processing, palmitoleoylation is required for efficient binding to frizzled receptors. Depalmitoleoylation leads to Wnt signaling pathway inhibition. Transcripts are expressed ubiquitously in early oocytes but become vegetally localized during mid-oogenesis then enriched on the dorsal side by the 8 to 16 cell stage. The protein becomes asymmetrically concentrated on the dorsal side by the 64-cell stage. During gastrulation, expressed in the lateral and ventral marginal zone, and during tadpole stages in the somites and first branchial arch. Weakly expressed in the pronephros from at least stage 12.5, with kidney expression increasing until stage 35. Expressed in the prospective posterior gut between stages 13 and 20, and in the deep foregut endoderm. Prior to neural crest cell migration, expressed in a domain flanking the neural crest on the lateral or epidermal side (the opposite side to wnt11/wnt11-r).

It is found in the secreted. It localises to the extracellular space. Its subcellular location is the extracellular matrix. Its function is as follows. Ligand for the frizzled7 transmembrane receptor. Primarily acts via non-canonical Wnt pathways mediated by either Ca(2+) and PKC, or by JNK and dvl2/dsh. Depending on the cellular context, can also signal via the canonical Wnt pathway mediated by beta-catenin and dvl2/dsh. May also inhibit canonical Wnt signaling. Maternally initiates dorsal/ventral axis formation by a canonical route, which signals via lrp6. In a complex with wnt5a, activates the canonical and non-canonical processes involved in axis formation. In the non-canonical pathway, acts through fzd7/fz7 to induce phosphorylation of dvl2/dsh. Signals through a non-canonical Wnt pathway to regulate convergent extension movements during gastrulation. Interactions with the secreted Wnt antagonist sfrp5 to coordinate foregut development, acting via a non-canonical Wnt pathway whereby sfrp5 restricts wnt11b activity to prevent inappropriate foregut formation. Mediates cardiogenesis via non-canonical Wnt signaling involving JNK-activation and PKC. Acts redundantly with wnt11/wnt11r during pronephros induction. This is Protein Wnt-11b (wnt11b) from Xenopus laevis (African clawed frog).